Here is a 92-residue protein sequence, read N- to C-terminus: Small ribosomal subunit protein bS18 (92 aa).

Belongs to the bacterial ribosomal protein bS18 family. As to quaternary structure, part of the 30S ribosomal subunit. Forms a tight heterodimer with protein bS6.

In terms of biological role, binds as a heterodimer with protein bS6 to the central domain of the 16S rRNA, where it helps stabilize the platform of the 30S subunit. This Pelagibacter ubique (strain HTCC1062) protein is Small ribosomal subunit protein bS18.